Reading from the N-terminus, the 274-residue chain is NADPH-dependent 7-cyano-7-deazaguanine reductase (274 aa).

Residue 80–82 coordinates substrate; sequence VES. 82–83 contacts NADPH; the sequence is SK. Catalysis depends on cysteine 181, which acts as the Thioimide intermediate. The Proton donor role is filled by aspartate 188. A substrate-binding site is contributed by 220–221; that stretch reads HE. NADPH is bound at residue 249–250; that stretch reads RG.

Belongs to the GTP cyclohydrolase I family. QueF type 2 subfamily. In terms of assembly, homodimer.

The protein resides in the cytoplasm. It catalyses the reaction 7-aminomethyl-7-carbaguanine + 2 NADP(+) = 7-cyano-7-deazaguanine + 2 NADPH + 3 H(+). It functions in the pathway tRNA modification; tRNA-queuosine biosynthesis. Its function is as follows. Catalyzes the NADPH-dependent reduction of 7-cyano-7-deazaguanine (preQ0) to 7-aminomethyl-7-deazaguanine (preQ1). The chain is NADPH-dependent 7-cyano-7-deazaguanine reductase from Burkholderia mallei (strain NCTC 10247).